A 1121-amino-acid polypeptide reads, in one-letter code: Putative ATP-dependent RNA helicase ECM32 (1121 aa).

Residues 157 to 187 form a disordered region; it reads NSTRKPRKKGGRRVGRGKKGRKGAKIKKEKK. Residues 160-184 are compositionally biased toward basic residues; the sequence is RKPRKKGGRRVGRGKKGRKGAKIKK. A Phosphoserine modification is found at serine 227. Positions 233 to 452 are disordered; that stretch reads AKVSKSETSR…NQEKNNGKTK (220 aa). Positions 251 to 263 are enriched in basic residues; sequence NKGKGNKANHKKN. A compositionally biased stretch (polar residues) spans 278–287; it reads IRNNVRNSQP. Basic and acidic residues predominate over residues 307–316; the sequence is GKNESVDKHQ. Residues 323–336 show a composition bias toward low complexity; it reads LNGNGSGSTNTTGL. Positions 342-363 are enriched in basic and acidic residues; that stretch reads DHAGQKTKGNDKTGNKNPREAK. Over residues 376–413 the composition is skewed to polar residues; the sequence is KSNNQPNKGTSRWTIGSDTESSREPSISPNENTTSITK. Phosphoserine is present on serine 392. Residues 426–452 show a composition bias toward basic and acidic residues; the sequence is LNEKSKTTTMPKKLETKNQEKNNGKTK. Threonine 465 is subject to Phosphothreonine. 670-677 serves as a coordination point for ATP; the sequence is GPPGTGKT.

The protein belongs to the DNA2/NAM7 helicase family. Interacts with the peptidyl release factors SUP35 and weakly with SUP45.

The protein resides in the cytoplasm. The enzyme catalyses ATP + H2O = ADP + phosphate + H(+). Probable RNA helicase, which may be involved in modulation of the translation termination process. Probably unwinds double-stranded RNA. In vitro, unwinds covalently closed, circular DNA in the presence of a DNA topoisomerase TOP1 and replication factor-A protein RFA1. The polypeptide is Putative ATP-dependent RNA helicase ECM32 (ECM32) (Saccharomyces cerevisiae (strain ATCC 204508 / S288c) (Baker's yeast)).